Here is a 478-residue protein sequence, read N- to C-terminus: Transposase for insertion sequence element IS231E (478 aa).

Belongs to the transposase 11 family.

In terms of biological role, involved in the transposition of the insertion sequence. This is Transposase for insertion sequence element IS231E from Bacillus thuringiensis subsp. finitimus.